A 569-amino-acid polypeptide reads, in one-letter code: uncharacterized protein (569 aa).

The signal sequence occupies residues 1–22 (MSLLVKAALILKCASMLQGVSA). The tract at residues 498–541 (RETSILDSTNTTSTNATNTTTTTSSSSTASSSASASSSTSATSG) is disordered. The segment covering 505-540 (STNTTSTNATNTTTTTSSSSTASSSASASSSTSATS) has biased composition (low complexity).

The protein resides in the secreted. It localises to the cell surface. This is an uncharacterized protein from Schizosaccharomyces pombe (strain 972 / ATCC 24843) (Fission yeast).